The primary structure comprises 305 residues: Probable 2-methylisocitrate lyase 1 (305 aa).

52–54 (SGA) provides a ligand contact to substrate. Mg(2+)-binding residues include aspartate 91 and aspartate 93. Residues 128-129 (CG), arginine 163, glutamate 193, 216-218 (NMT), arginine 247, and arginine 276 each bind substrate.

The protein belongs to the isocitrate lyase/PEP mutase superfamily. Methylisocitrate lyase family. As to quaternary structure, homotetramer; dimer of dimers. It depends on Mg(2+) as a cofactor.

The catalysed reaction is (2S,3R)-3-hydroxybutane-1,2,3-tricarboxylate = pyruvate + succinate. Catalyzes the thermodynamically favored C-C bond cleavage of (2R,3S)-2-methylisocitrate to yield pyruvate and succinate via an alpha-carboxy-carbanion intermediate. This is Probable 2-methylisocitrate lyase 1 from Corynebacterium glutamicum (strain ATCC 13032 / DSM 20300 / JCM 1318 / BCRC 11384 / CCUG 27702 / LMG 3730 / NBRC 12168 / NCIMB 10025 / NRRL B-2784 / 534).